The following is a 219-amino-acid chain: Large ribosomal subunit protein uL3 (219 aa).

Residues 133–153 form a disordered region; sequence GRASHGNSRSHNVPGSIGMAQ. An N5-methylglutamine modification is found at glutamine 153.

Belongs to the universal ribosomal protein uL3 family. In terms of assembly, part of the 50S ribosomal subunit. Forms a cluster with proteins L14 and L19. Methylated by PrmB.

One of the primary rRNA binding proteins, it binds directly near the 3'-end of the 23S rRNA, where it nucleates assembly of the 50S subunit. In Burkholderia mallei (strain NCTC 10247), this protein is Large ribosomal subunit protein uL3.